The following is an 821-amino-acid chain: High affinity potassium transporter (821 aa).

A compositionally biased stretch (polar residues) spans 1 to 10 (MSDSQSNKQN). The disordered stretch occupies residues 1-47 (MSDSQSNKQNQGEDDNNVSSSIESNENYPFRLNDEESEPQSSTTESM). The Cytoplasmic portion of the chain corresponds to 1 to 57 (MSDSQSNKQNQGEDDNNVSSSIESNENYPFRLNDEESEPQSSTTESMLKAKKQSWRQ). Over residues 17-27 (NVSSSIESNEN) the composition is skewed to low complexity. A helical membrane pass occupies residues 58–78 (VLMLGFSSLGAIYGDIGTSPL). The Extracellular segment spans residues 79 to 101 (YVLNSIKYPNSSPTEEDIYGAIS). Residues 102-122 (IIFYLFTFIVIFKYILIVLFL) traverse the membrane as a helical segment. Topologically, residues 123–190 (GTNDGEGGQV…KASGFKTNPK (68 aa)) are cytoplasmic. Residues 191–211 (LIKFISKFILFGCFFGCSLVM) form a helical membrane-spanning segment. Topologically, residues 212-238 (SDGLLTPTTSVLSAIAGIQIANPSFND) are extracellular. Residues 239 to 259 (VLAVSEVVLIVLFLIQQFGSN) form a helical membrane-spanning segment. Lys260 is a topological domain (cytoplasmic). Residues 261-281 (ISFTFAPIIFLWLIGLIISGI) traverse the membrane as a helical segment. The Extracellular segment spans residues 282 to 306 (YNIVKFHPAVFKSLSPYYAIQLLKH). A helical transmembrane segment spans residues 307-327 (SGIDVFSGAMLSITGTEAMFA). The Cytoplasmic portion of the chain corresponds to 328 to 340 (DVGHFGRLPIQLT). Residues 341-361 (LTLFVYPALIICYLGQGAYII) traverse the membrane as a helical segment. Topologically, residues 362–386 (KHPEALSNPFFYSIPGGLNSWIYWV) are extracellular. A helical membrane pass occupies residues 387-407 (MFVLATLSTIIASQALILGVF). Over 408–434 (SITSQLINLDCFPNFKIIHVSKKYAGK) the chain is Cytoplasmic. A helical membrane pass occupies residues 435-455 (VYIPAINWLLMIGVCATTAGF). The Extracellular portion of the chain corresponds to 456-463 (KNSNNVTA). Asn460 carries an N-linked (GlcNAc...) asparagine glycan. Residues 464–484 (AYGLGITLDFLVTSSLIMVCM) traverse the membrane as a helical segment. Residues 485–491 (TYVYNWN) lie on the Cytoplasmic side of the membrane. A helical membrane pass occupies residues 492-512 (ILIPITYALIFLPLEVIMVIS). Residues 513-516 (NLKK) are Extracellular-facing. The helical transmembrane segment at 517–537 (ITHGAWFPLMMSGIFMMFLSF) threads the bilayer. The Cytoplasmic segment spans residues 538–821 (WRWARSRKVN…KMFLGGVVRI (284 aa)).

Belongs to the HAK/KUP transporter (TC 2.A.72) family.

It is found in the membrane. Functionally, major high-affinity potassium uptake protein. This chain is High affinity potassium transporter (HAK1), found in Schwanniomyces occidentalis (Yeast).